The primary structure comprises 190 residues: Ribosome maturation factor RimP (190 aa).

The interval 159 to 190 (ELELAGGIPEGRVAPADADASEDEEVVEGLDK) is disordered. The segment covering 177–190 (DASEDEEVVEGLDK) has biased composition (acidic residues).

Belongs to the RimP family.

It localises to the cytoplasm. Its function is as follows. Required for maturation of 30S ribosomal subunits. In Rhodococcus opacus (strain B4), this protein is Ribosome maturation factor RimP.